Reading from the N-terminus, the 262-residue chain is Tryptophan synthase alpha chain (262 aa).

Active-site proton acceptor residues include E48 and D59.

The protein belongs to the TrpA family. Tetramer of two alpha and two beta chains.

The catalysed reaction is (1S,2R)-1-C-(indol-3-yl)glycerol 3-phosphate + L-serine = D-glyceraldehyde 3-phosphate + L-tryptophan + H2O. It participates in amino-acid biosynthesis; L-tryptophan biosynthesis; L-tryptophan from chorismate: step 5/5. Functionally, the alpha subunit is responsible for the aldol cleavage of indoleglycerol phosphate to indole and glyceraldehyde 3-phosphate. In Helicobacter pylori (strain P12), this protein is Tryptophan synthase alpha chain.